We begin with the raw amino-acid sequence, 186 residues long: RNA-free ribonuclease P (186 aa).

The protein belongs to the HARP family.

It catalyses the reaction Endonucleolytic cleavage of RNA, removing 5'-extranucleotides from tRNA precursor.. Its function is as follows. RNA-free RNase P that catalyzes the removal of the 5'-leader sequence from pre-tRNA to produce the mature 5'-terminus. The sequence is that of RNA-free ribonuclease P from Hydrogenobaculum sp. (strain Y04AAS1).